The primary structure comprises 256 residues: Small ribosomal subunit protein eS1 (256 aa).

Ala2 is subject to N-acetylalanine; partial.

The protein belongs to the eukaryotic ribosomal protein eS1 family. Component of the small ribosomal subunit. Mature ribosomes consist of a small (40S) and a large (60S) subunit. The 40S subunit contains about 33 different proteins and 1 molecule of RNA (18S). The 60S subunit contains about 49 different proteins and 3 molecules of RNA (25S, 5.8S and 5S).

The protein resides in the cytoplasm. This is Small ribosomal subunit protein eS1 from Candida tropicalis (strain ATCC MYA-3404 / T1) (Yeast).